The following is a 218-amino-acid chain: TPA-induced transmembrane protein homolog (218 aa).

The disordered stretch occupies residues Met1 to Trp54. A helical membrane pass occupies residues Lys66–Leu86.

It localises to the endoplasmic reticulum membrane. This is TPA-induced transmembrane protein homolog from Mus musculus (Mouse).